The sequence spans 95 residues: Large ribosomal subunit protein uL23 (95 aa).

The protein belongs to the universal ribosomal protein uL23 family. Part of the 50S ribosomal subunit. Contacts protein L29, and trigger factor when it is bound to the ribosome.

Its function is as follows. One of the early assembly proteins it binds 23S rRNA. One of the proteins that surrounds the polypeptide exit tunnel on the outside of the ribosome. Forms the main docking site for trigger factor binding to the ribosome. The polypeptide is Large ribosomal subunit protein uL23 (Levilactobacillus brevis (strain ATCC 367 / BCRC 12310 / CIP 105137 / JCM 1170 / LMG 11437 / NCIMB 947 / NCTC 947) (Lactobacillus brevis)).